The chain runs to 331 residues: D-aspartate oxidase 2 (331 aa).

Residues Asp-35, Lys-36, Ser-43, and Gly-307 each contribute to the FAD site.

It belongs to the DAMOX/DASOX family. It depends on FAD as a cofactor.

It is found in the cytoplasm. The catalysed reaction is D-aspartate + O2 + H2O = oxaloacetate + H2O2 + NH4(+). It catalyses the reaction D-glutamate + O2 + H2O = H2O2 + 2-oxoglutarate + NH4(+). In terms of biological role, selectively catalyzes the oxidative deamination of acidic amino acids. May play a role in the egg-laying events and early development of the worm, in addition to quality control of the germ cells. This is D-aspartate oxidase 2 from Caenorhabditis briggsae.